We begin with the raw amino-acid sequence, 491 residues long: Ketol-acid reductoisomerase (NADP(+)) (491 aa).

Residues Ala-15 to Ser-208 enclose the KARI N-terminal Rossmann domain. NADP(+) is bound by residues Cys-45–Gln-48, Arg-68, Arg-76, Ser-78, and Asp-108–Gln-110. The active site involves His-132. Position 158 (Gly-158) interacts with NADP(+). KARI C-terminal knotted domains lie at Ser-209–Gln-344 and Tyr-345–Met-484. Residues Asp-217, Glu-221, Glu-389, and Glu-393 each contribute to the Mg(2+) site. Ser-414 provides a ligand contact to substrate.

Belongs to the ketol-acid reductoisomerase family. Mg(2+) serves as cofactor.

The enzyme catalyses (2R)-2,3-dihydroxy-3-methylbutanoate + NADP(+) = (2S)-2-acetolactate + NADPH + H(+). It catalyses the reaction (2R,3R)-2,3-dihydroxy-3-methylpentanoate + NADP(+) = (S)-2-ethyl-2-hydroxy-3-oxobutanoate + NADPH + H(+). It participates in amino-acid biosynthesis; L-isoleucine biosynthesis; L-isoleucine from 2-oxobutanoate: step 2/4. The protein operates within amino-acid biosynthesis; L-valine biosynthesis; L-valine from pyruvate: step 2/4. Involved in the biosynthesis of branched-chain amino acids (BCAA). Catalyzes an alkyl-migration followed by a ketol-acid reduction of (S)-2-acetolactate (S2AL) to yield (R)-2,3-dihydroxy-isovalerate. In the isomerase reaction, S2AL is rearranged via a Mg-dependent methyl migration to produce 3-hydroxy-3-methyl-2-ketobutyrate (HMKB). In the reductase reaction, this 2-ketoacid undergoes a metal-dependent reduction by NADPH to yield (R)-2,3-dihydroxy-isovalerate. This Citrobacter koseri (strain ATCC BAA-895 / CDC 4225-83 / SGSC4696) protein is Ketol-acid reductoisomerase (NADP(+)).